Reading from the N-terminus, the 92-residue chain is Alpha-hemoglobin-stabilizing protein (92 aa).

The protein belongs to the AHSP family. As to quaternary structure, monomer. Forms a heterodimer with free alpha-hemoglobin. Does not bind beta-hemoglobin nor alpha(2)beta(2) hemoglobin A.

It is found in the cytoplasm. Acts as a chaperone to prevent the harmful aggregation of alpha-hemoglobin during normal erythroid cell development. Specifically protects free alpha-hemoglobin from precipitation. In Bos taurus (Bovine), this protein is Alpha-hemoglobin-stabilizing protein (AHSP).